The chain runs to 880 residues: Guanine nucleotide-binding protein subunit beta 2 (880 aa).

S24 bears the Phosphoserine mark. Kelch repeat units follow at residues 291–339 (NIYI…MVNN), 377–425 (HIFF…KIDI), and 501–552 (TVII…LTPS). The tract at residues 624-649 (FNSGSAAQESPKAGASASSASAASFD) is disordered. The span at 638–647 (ASASSASAAS) shows a compositional bias: low complexity. The stretch at 691 to 738 (TVVLHGGSNGLNVLDDMWLMDLECETWTPIETFAKADSSEDGDEKLDS) is one Kelch 4 repeat.

G proteins are composed of 3 units, alpha, beta and gamma. GPB1 interacts with the alpha subunit GPA2.

Its subcellular location is the cytoplasm. It localises to the mitochondrion. Its function is as follows. Beta subunit of a guanine nucleotide-binding protein (G protein). G proteins are involved as modulators or transducers in various transmembrane signaling systems. The beta and gamma chains are required for the GTPase activity, for replacement of GDP by GTP, and for G protein-effector interaction. Involved in the determination of the cAMP level according to nutritional conditions, most probably as a regulator of cAMP phosphodiesterase. Required for the control of pseudohyphal and haploid invasive growth. In Saccharomyces cerevisiae (strain ATCC 204508 / S288c) (Baker's yeast), this protein is Guanine nucleotide-binding protein subunit beta 2 (GPB2).